A 444-amino-acid polypeptide reads, in one-letter code: N-succinylarginine dihydrolase (444 aa).

Substrate is bound by residues 19-28 (SGLSVGNIAS), Asn-110, and 137-138 (HR). Glu-174 is an active-site residue. Substrate is bound at residue Arg-214. Residue His-250 is part of the active site. The substrate site is built by Asp-252 and Asn-362. Cys-368 acts as the Nucleophile in catalysis.

Belongs to the succinylarginine dihydrolase family. As to quaternary structure, homodimer.

The catalysed reaction is N(2)-succinyl-L-arginine + 2 H2O + 2 H(+) = N(2)-succinyl-L-ornithine + 2 NH4(+) + CO2. It functions in the pathway amino-acid degradation; L-arginine degradation via AST pathway; L-glutamate and succinate from L-arginine: step 2/5. In terms of biological role, catalyzes the hydrolysis of N(2)-succinylarginine into N(2)-succinylornithine, ammonia and CO(2). The sequence is that of N-succinylarginine dihydrolase from Aliivibrio fischeri (strain MJ11) (Vibrio fischeri).